A 268-amino-acid chain; its full sequence is Cytochrome c oxidase subunit 3 (268 aa).

The next 7 helical transmembrane spans lie at 23 to 43 (ILVS…MHGF), 49 to 69 (WVVF…RDII), 88 to 108 (IGFI…FWAF), 141 to 161 (TILL…LLGG), 166 to 186 (TLLG…CQYM), 203 to 223 (VFYF…IMLG), and 246 to 266 (ILYY…FYWW).

Belongs to the cytochrome c oxidase subunit 3 family. Component of the cytochrome c oxidase (complex IV, CIV), a multisubunit enzyme composed of a catalytic core of 3 subunits and several supernumerary subunits. The complex exists as a monomer or a dimer and forms supercomplexes (SCs) in the inner mitochondrial membrane with ubiquinol-cytochrome c oxidoreductase (cytochrome b-c1 complex, complex III, CIII).

The protein localises to the mitochondrion inner membrane. It catalyses the reaction 4 Fe(II)-[cytochrome c] + O2 + 8 H(+)(in) = 4 Fe(III)-[cytochrome c] + 2 H2O + 4 H(+)(out). Functionally, component of the cytochrome c oxidase, the last enzyme in the mitochondrial electron transport chain which drives oxidative phosphorylation. The respiratory chain contains 3 multisubunit complexes succinate dehydrogenase (complex II, CII), ubiquinol-cytochrome c oxidoreductase (cytochrome b-c1 complex, complex III, CIII) and cytochrome c oxidase (complex IV, CIV), that cooperate to transfer electrons derived from NADH and succinate to molecular oxygen, creating an electrochemical gradient over the inner membrane that drives transmembrane transport and the ATP synthase. Cytochrome c oxidase is the component of the respiratory chain that catalyzes the reduction of oxygen to water. Electrons originating from reduced cytochrome c in the intermembrane space (IMS) are transferred via the dinuclear copper A center (CU(A)) of subunit 2 and heme A of subunit 1 to the active site in subunit 1, a binuclear center (BNC) formed by heme A3 and copper B (CU(B)). The BNC reduces molecular oxygen to 2 water molecules using 4 electrons from cytochrome c in the IMS and 4 protons from the mitochondrial matrix. The chain is Cytochrome c oxidase subunit 3 (COX3) from Yarrowia lipolytica (strain CLIB 122 / E 150) (Yeast).